The chain runs to 200 residues: UPF0316 protein SACOL1973 (200 aa).

The next 3 helical transmembrane spans lie at 8–28, 40–60, and 66–86; these read PWLMVLTIFIINVCYVTFLTM, IAASVSFLEVLVYIVGLGLVM, and IQNIIAYAFGFSIGIIVGMKI.

Belongs to the UPF0316 family.

The protein localises to the cell membrane. This Staphylococcus aureus (strain COL) protein is UPF0316 protein SACOL1973.